Consider the following 357-residue polypeptide: Chorismate synthase (357 aa).

R47 serves as a coordination point for NADP(+). FMN-binding positions include 123–125 (RAS), G281, 296–300 (KPTSS), and R324.

Belongs to the chorismate synthase family. In terms of assembly, homotetramer. FMNH2 is required as a cofactor.

It catalyses the reaction 5-O-(1-carboxyvinyl)-3-phosphoshikimate = chorismate + phosphate. It functions in the pathway metabolic intermediate biosynthesis; chorismate biosynthesis; chorismate from D-erythrose 4-phosphate and phosphoenolpyruvate: step 7/7. Functionally, catalyzes the anti-1,4-elimination of the C-3 phosphate and the C-6 proR hydrogen from 5-enolpyruvylshikimate-3-phosphate (EPSP) to yield chorismate, which is the branch point compound that serves as the starting substrate for the three terminal pathways of aromatic amino acid biosynthesis. This reaction introduces a second double bond into the aromatic ring system. The chain is Chorismate synthase from Chlamydia trachomatis serovar L2 (strain ATCC VR-902B / DSM 19102 / 434/Bu).